We begin with the raw amino-acid sequence, 297 residues long: rRNA 2'-O-methyltransferase fibrillarin (297 aa).

A disordered region spans residues Met1 to Gly56. Arg2, Arg7, Arg12, Arg16, Arg19, Arg24, Arg28, Arg32, Arg36, Arg40, Arg44, Arg48, and Arg52 each carry asymmetric dimethylarginine. Residues Thr149–Thr150, Glu168–Phe169, Asp192–Ala193, and Asp212–Gln215 each bind S-adenosyl-L-methionine.

It belongs to the methyltransferase superfamily. Fibrillarin family. Component of box C/D small nucleolar ribonucleoprotein (snoRNP) particles. It is associated with the U3, U8 and U13 small nuclear RNAs. By homology to other fibrillarins, some or all of the N-terminal domain arginines are modified to asymmetric dimethylarginine (DMA).

The protein resides in the nucleus. The protein localises to the nucleolus. The enzyme catalyses L-glutaminyl-[histone H2A] + S-adenosyl-L-methionine = N(5)-methyl-L-glutaminyl-[histone H2A] + S-adenosyl-L-homocysteine + H(+). Its function is as follows. S-adenosyl-L-methionine-dependent methyltransferase that has the ability to methylate both RNAs and proteins. Involved in pre-rRNA processing. Utilizes the methyl donor S-adenosyl-L-methionine to catalyze the site-specific 2'-hydroxyl methylation of ribose moieties in pre-ribosomal RNA. Site specificity is provided by a guide RNA that base pairs with the substrate. Methylation occurs at a characteristic distance from the sequence involved in base pairing with the guide RNA. Also acts as a protein methyltransferase by mediating methylation of 'Gln-105' of histone H2A (H2AQ105me), a modification that impairs binding of the FACT complex and is specifically present at 35S ribosomal DNA locus. In Leishmania major, this protein is rRNA 2'-O-methyltransferase fibrillarin.